The sequence spans 652 residues: Acetyl-coenzyme A synthetase (652 aa).

CoA is bound by residues 191-194, Thr-311, and Asn-335; that span reads RAGR. ATP-binding positions include 387–389, 411–416, Asp-500, and Arg-515; these read GEP and DTWWQT. Ser-523 provides a ligand contact to CoA. ATP is bound at residue Arg-526. Residues Val-537, His-539, and Ile-542 each contribute to the Mg(2+) site. Arg-584 is a CoA binding site. Lys-609 is subject to N6-acetyllysine.

This sequence belongs to the ATP-dependent AMP-binding enzyme family. The cofactor is Mg(2+). Acetylated. Deacetylation by the SIR2-homolog deacetylase activates the enzyme.

It catalyses the reaction acetate + ATP + CoA = acetyl-CoA + AMP + diphosphate. In terms of biological role, catalyzes the conversion of acetate into acetyl-CoA (AcCoA), an essential intermediate at the junction of anabolic and catabolic pathways. Acs undergoes a two-step reaction. In the first half reaction, Acs combines acetate with ATP to form acetyl-adenylate (AcAMP) intermediate. In the second half reaction, it can then transfer the acetyl group from AcAMP to the sulfhydryl group of CoA, forming the product AcCoA. Functionally, enables the cell to use acetate during aerobic growth to generate energy via the TCA cycle, and biosynthetic compounds via the glyoxylate shunt. Acetylates CheY, the response regulator involved in flagellar movement and chemotaxis. In Cronobacter sakazakii (strain ATCC BAA-894) (Enterobacter sakazakii), this protein is Acetyl-coenzyme A synthetase.